The following is a 246-amino-acid chain: V-type proton ATPase subunit D (246 aa).

It belongs to the V-ATPase D subunit family. V-ATPase is a heteromultimeric enzyme made up of two complexes: the ATP-hydrolytic V1 complex and the proton translocation V0 complex. The V1 complex consists of three catalytic AB heterodimers that form a heterohexamer, three peripheral stalks each consisting of EG heterodimers, one central rotor including subunits D and F, and the regulatory subunits C and H. The proton translocation complex V0 consists of the proton transport subunit a, a ring of proteolipid subunits c9c'', rotary subunit d, subunits e and f, and the accessory subunits VhaAC45 and ATP6AP2.

Its function is as follows. Subunit of the V1 complex of vacuolar(H+)-ATPase (V-ATPase), a multisubunit enzyme composed of a peripheral complex (V1) that hydrolyzes ATP and a membrane integral complex (V0) that translocates protons. V-ATPase is responsible for acidifying and maintaining the pH of intracellular compartments and in some cell types, is targeted to the plasma membrane, where it is responsible for acidifying the extracellular environment. In Manduca sexta (Tobacco hawkmoth), this protein is V-type proton ATPase subunit D.